Reading from the N-terminus, the 152-residue chain is UPF0225 protein YchJ (152 aa).

Belongs to the UPF0225 family.

The sequence is that of UPF0225 protein YchJ from Escherichia coli O17:K52:H18 (strain UMN026 / ExPEC).